Reading from the N-terminus, the 614-residue chain is 1-deoxy-D-xylulose-5-phosphate synthase (614 aa).

Residues H74 and 115–117 (AHS) each bind thiamine diphosphate. D146 serves as a coordination point for Mg(2+). Thiamine diphosphate is bound by residues 147 to 148 (GA), N175, Y282, and E363. N175 lines the Mg(2+) pocket.

This sequence belongs to the transketolase family. DXPS subfamily. Homodimer. Requires Mg(2+) as cofactor. The cofactor is thiamine diphosphate.

The enzyme catalyses D-glyceraldehyde 3-phosphate + pyruvate + H(+) = 1-deoxy-D-xylulose 5-phosphate + CO2. It participates in metabolic intermediate biosynthesis; 1-deoxy-D-xylulose 5-phosphate biosynthesis; 1-deoxy-D-xylulose 5-phosphate from D-glyceraldehyde 3-phosphate and pyruvate: step 1/1. Functionally, catalyzes the acyloin condensation reaction between C atoms 2 and 3 of pyruvate and glyceraldehyde 3-phosphate to yield 1-deoxy-D-xylulose-5-phosphate (DXP). The sequence is that of 1-deoxy-D-xylulose-5-phosphate synthase from Nitrosospira multiformis (strain ATCC 25196 / NCIMB 11849 / C 71).